The following is a 176-amino-acid chain: Scytalone dehydratase-like protein AacuK (176 aa).

Substrate is bound by residues Tyr26 and Tyr46. Residues His81 and His107 contribute to the active site.

It belongs to the scytalone dehydratase family.

The protein operates within secondary metabolite biosynthesis. In terms of biological role, scytalone dehydratase-like protein; part of the gene cluster that mediates the biosynthesis of the tetrahydroxanthone dimer secalonic acid D. The pathway begins with the synthesis of atrochrysone thioester by the polyketide synthase AacuL. The atrochrysone carboxyl ACP thioesterase AacuM then breaks the thioester bond and releases the atrochrysone carboxylic acid from AacuL. Atrochrysone carboxylic acid is decarboxylated by the decarboxylase AacuI, and oxidized by the anthrone oxygenase AacuG to yield emodin. Emodin is then reduced to emodin hydroquinone by a yet unidentified oxidoreductase. A-ring reduction by the short chain dehydrogenase AacuN, dehydration by the scytalone dehydratase-like protein AacuK and probable spontaneous re-oxidation, results in overall deoxygenation to chrysophanol. Baeyer-Villiger oxidation by the Baeyer-Villiger monooxygenase (BVMO) AacuH then yields monodictyphenone. Monodictyphenone is transformed into compounds with the tetrahydroxanthone skeleton via methylesterification by the methyltransferase AacuQ, followed by the action of the flavin-dependent monooxygenase AacuC, the isomerase AacuP, and the short chain dehydrogenase/reductase AacuF or AacuD. AacuF and AacuD should accept the same compound as a substrate but perform the ketoreduction with a different stereoselectivity, thus yielding blennolides B and A, respectively. In the final step of the biosynthesis, the cytochrome P450 monooxygenase AacuE accepts blennolide B and/or blennolide A to conduct the dimerization reaction to furnish the tetrahydroxanthone dimers, secalonic acids D, B, and F. This Aspergillus aculeatus (strain ATCC 16872 / CBS 172.66 / WB 5094) protein is Scytalone dehydratase-like protein AacuK.